A 251-amino-acid polypeptide reads, in one-letter code: DNA repair protein RecO (251 aa).

Belongs to the RecO family.

Its function is as follows. Involved in DNA repair and RecF pathway recombination. In Lactococcus lactis subsp. cremoris (strain MG1363), this protein is DNA repair protein RecO.